Consider the following 1295-residue polypeptide: Phosphoribosylformylglycinamidine synthase (1295 aa).

A disordered region spans residues 305-327 (WPGAATGSGGEIRDEGATGRGAK). ATP contacts are provided by residues 307–318 (GAATGSGGEIRD) and Ala-678. Glu-718, Asn-722, and Asp-884 together coordinate Mg(2+). Ser-886 contacts ATP. The Glutamine amidotransferase type-1 domain maps to 1042–1295 (VAVLREQGVN…IFRNARKQLG (254 aa)). Residue Cys-1135 is the Nucleophile of the active site. Active-site residues include His-1260 and Glu-1262.

In the N-terminal section; belongs to the FGAMS family. In terms of assembly, monomer. Post-translationally, both N-terminus methionine truncation and retention have been observed for this protein.

The protein localises to the cytoplasm. The catalysed reaction is N(2)-formyl-N(1)-(5-phospho-beta-D-ribosyl)glycinamide + L-glutamine + ATP + H2O = 2-formamido-N(1)-(5-O-phospho-beta-D-ribosyl)acetamidine + L-glutamate + ADP + phosphate + H(+). The protein operates within purine metabolism; IMP biosynthesis via de novo pathway; 5-amino-1-(5-phospho-D-ribosyl)imidazole from N(2)-formyl-N(1)-(5-phospho-D-ribosyl)glycinamide: step 1/2. Phosphoribosylformylglycinamidine synthase involved in the purines biosynthetic pathway. Catalyzes the ATP-dependent conversion of formylglycinamide ribonucleotide (FGAR) and glutamine to yield formylglycinamidine ribonucleotide (FGAM) and glutamate. In Escherichia coli (strain K12), this protein is Phosphoribosylformylglycinamidine synthase.